A 291-amino-acid polypeptide reads, in one-letter code: uncharacterized protein (291 aa).

10 consecutive transmembrane segments (helical) span residues 5 to 23 (ILLSLSASVLFGYLYYFST), 33 to 52 (IFGFRIIFTLPFVIAAVFLF), 69 to 91 (PLLIFGFLFNSAMMGIQIWLFLW), 101 to 120 (VSFGYLLLPLTMVLVGRLVF), 127 to 144 (VKFLAVVIAAIGVFSNIL), 148 to 165 (GLSWEALLVSFGYSTYFA), 172 to 194 (INDLAGFCLEMSLLLPVCIYFAW), 209 to 228 (LLLLVLLGLISGVALNTYIV), 235 to 257 (INVLGLLGYAEPIMMLFVSFLIG), and 262 to 284 (SETIPLFICLMISMILFMSEGLV).

This sequence belongs to the EamA transporter family.

Its subcellular location is the cell membrane. This is an uncharacterized protein from Pasteurella multocida (strain Pm70).